The chain runs to 159 residues: Transcription antitermination protein NusB (159 aa).

Belongs to the NusB family.

Functionally, involved in transcription antitermination. Required for transcription of ribosomal RNA (rRNA) genes. Binds specifically to the boxA antiterminator sequence of the ribosomal RNA (rrn) operons. In Xanthomonas campestris pv. campestris (strain 8004), this protein is Transcription antitermination protein NusB.